Reading from the N-terminus, the 128-residue chain is Histone H2A.2 (128 aa).

The protein belongs to the histone H2A family. The nucleosome is a histone octamer containing two molecules each of H2A, H2B, H3 and H4 assembled in one H3-H4 heterotetramer and two H2A-H2B heterodimers. The octamer wraps approximately 147 bp of DNA. In terms of tissue distribution, expressed in the generative cell within the bicellular pollen. Not detected in other reproductive or vegetative tissues.

Its subcellular location is the nucleus. It localises to the chromosome. Core component of nucleosome. Nucleosomes wrap and compact DNA into chromatin, limiting DNA accessibility to the cellular machineries which require DNA as a template. Histones thereby play a central role in transcription regulation, DNA repair, DNA replication and chromosomal stability. DNA accessibility is regulated via a complex set of post-translational modifications of histones, also called histone code, and nucleosome remodeling. May be involved in the repression of gene expression in male gametes. The sequence is that of Histone H2A.2 (gH2A) from Lilium longiflorum (Trumpet lily).